A 928-amino-acid chain; its full sequence is Nuclear pore complex-interacting protein family member B12 (928 aa).

The helical transmembrane segment at 73-93 (VVITLWIVYLWVSLLKTIFWS) threads the bilayer. 2 disordered regions span residues 242-452 (RMGH…NIKT) and 663-928 (ERLR…RRLS). The span at 252-263 (QQHSITDNSLSL) shows a compositional bias: polar residues. The segment covering 349–359 (PLPPSAPPSAP) has biased composition (pro residues). Composition is skewed to basic and acidic residues over residues 406–416 (DNIKTPAERLR), 698–708 (DNIKTPAERLR), 740–750 (DNIKTPAERLR), and 782–792 (DNIKTPAERLR).

The protein belongs to the NPIP family.

It localises to the membrane. The chain is Nuclear pore complex-interacting protein family member B12 from Homo sapiens (Human).